Here is a 248-residue protein sequence, read N- to C-terminus: Triosephosphate isomerase (248 aa).

Positions 11 and 13 each coordinate substrate. Histidine 95 (electrophile) is an active-site residue. The active-site Proton acceptor is the glutamate 165.

This sequence belongs to the triosephosphate isomerase family. Homodimer.

The protein resides in the cytoplasm. It catalyses the reaction dihydroxyacetone phosphate = methylglyoxal + phosphate. It carries out the reaction D-glyceraldehyde 3-phosphate = dihydroxyacetone phosphate. Its pathway is carbohydrate degradation; glycolysis; D-glyceraldehyde 3-phosphate from glycerone phosphate: step 1/1. It functions in the pathway carbohydrate biosynthesis; gluconeogenesis. Triosephosphate isomerase is an extremely efficient metabolic enzyme that catalyzes the interconversion between dihydroxyacetone phosphate (DHAP) and D-glyceraldehyde-3-phosphate (G3P) in glycolysis and gluconeogenesis. Functionally, it is also responsible for the non-negligible production of methylglyoxal a reactive cytotoxic side-product that modifies and can alter proteins, DNA and lipids. In Xenopus laevis (African clawed frog), this protein is Triosephosphate isomerase (tpi1).